The following is a 154-amino-acid chain: Large ribosomal subunit protein uL13 (154 aa).

This sequence belongs to the universal ribosomal protein uL13 family. As to quaternary structure, part of the 50S ribosomal subunit.

Functionally, this protein is one of the early assembly proteins of the 50S ribosomal subunit, although it is not seen to bind rRNA by itself. It is important during the early stages of 50S assembly. This chain is Large ribosomal subunit protein uL13, found in Rhizobium etli (strain ATCC 51251 / DSM 11541 / JCM 21823 / NBRC 15573 / CFN 42).